The primary structure comprises 61 residues: Small ribosomal subunit protein uS14 (61 aa).

Cysteine 24, cysteine 27, cysteine 40, and cysteine 43 together coordinate Zn(2+).

The protein belongs to the universal ribosomal protein uS14 family. Zinc-binding uS14 subfamily. Part of the 30S ribosomal subunit. Contacts proteins S3 and S10. Zn(2+) is required as a cofactor.

Functionally, binds 16S rRNA, required for the assembly of 30S particles and may also be responsible for determining the conformation of the 16S rRNA at the A site. The protein is Small ribosomal subunit protein uS14 of Thermus aquaticus.